The chain runs to 511 residues: Phosphomethylpyrimidine synthase (511 aa).

Residues asparagine 127, methionine 156, tyrosine 185, histidine 221, 241–243 (SRG), 282–285 (DGLR), and glutamate 321 each bind substrate. Histidine 325 contributes to the Zn(2+) binding site. Tyrosine 348 serves as a coordination point for substrate. Residue histidine 389 participates in Zn(2+) binding. Cysteine 469, cysteine 472, and cysteine 477 together coordinate [4Fe-4S] cluster. The interval 492–511 (KGMEEKSEVTICNRKKESGK) is disordered.

It belongs to the ThiC family. [4Fe-4S] cluster is required as a cofactor.

The enzyme catalyses 5-amino-1-(5-phospho-beta-D-ribosyl)imidazole + S-adenosyl-L-methionine = 4-amino-2-methyl-5-(phosphooxymethyl)pyrimidine + CO + 5'-deoxyadenosine + formate + L-methionine + 3 H(+). It participates in cofactor biosynthesis; thiamine diphosphate biosynthesis. Its function is as follows. Catalyzes the synthesis of the hydroxymethylpyrimidine phosphate (HMP-P) moiety of thiamine from aminoimidazole ribotide (AIR) in a radical S-adenosyl-L-methionine (SAM)-dependent reaction. This is Phosphomethylpyrimidine synthase from Leptospira borgpetersenii serovar Hardjo-bovis (strain JB197).